The chain runs to 222 residues: UPF0173 metal-dependent hydrolase Mboo_0816 (222 aa).

Belongs to the UPF0173 family.

The polypeptide is UPF0173 metal-dependent hydrolase Mboo_0816 (Methanoregula boonei (strain DSM 21154 / JCM 14090 / 6A8)).